Consider the following 256-residue polypeptide: Fructose-1,6-bisphosphatase/inositol-1-monophosphatase (256 aa).

Residues glutamate 67, aspartate 83, leucine 85, and aspartate 86 each contribute to the Mg(2+) site. Substrate contacts are provided by residues 86–88 (DGS), arginine 170, isoleucine 175, and arginine 194. Residue aspartate 201 participates in Mg(2+) binding.

This sequence belongs to the inositol monophosphatase superfamily. FBPase class 4 family. In terms of assembly, homodimer. Mg(2+) is required as a cofactor.

The enzyme catalyses beta-D-fructose 1,6-bisphosphate + H2O = beta-D-fructose 6-phosphate + phosphate. The catalysed reaction is a myo-inositol phosphate + H2O = myo-inositol + phosphate. Functionally, phosphatase with broad specificity; it can dephosphorylate fructose 1,6-bisphosphate (FBP) and inositol-1-phosphate (IMP). However, while possessing a high FBPase activity in vitro, does not participate in gluconeogenesis in vivo. The protein is Fructose-1,6-bisphosphatase/inositol-1-monophosphatase (suhB) of Thermococcus kodakarensis (strain ATCC BAA-918 / JCM 12380 / KOD1) (Pyrococcus kodakaraensis (strain KOD1)).